The primary structure comprises 254 residues: Demethylmenaquinone methyltransferase (254 aa).

Residues Thr62, Asp80, 122–123 (DG), and Ser139 each bind S-adenosyl-L-methionine.

The protein belongs to the class I-like SAM-binding methyltransferase superfamily. MenG/UbiE family.

It catalyses the reaction a 2-demethylmenaquinol + S-adenosyl-L-methionine = a menaquinol + S-adenosyl-L-homocysteine + H(+). It functions in the pathway quinol/quinone metabolism; menaquinone biosynthesis; menaquinol from 1,4-dihydroxy-2-naphthoate: step 2/2. Functionally, methyltransferase required for the conversion of demethylmenaquinol (DMKH2) to menaquinol (MKH2). The chain is Demethylmenaquinone methyltransferase from Parafrankia sp. (strain EAN1pec).